A 295-amino-acid chain; its full sequence is Cutinase 11 (295 aa).

Residues M1–A17 form the signal peptide. Residues C25 and C102 are joined by a disulfide bond. Residues S113, D198, and H210 contribute to the active site. A disulfide bridge connects residues C184 and C202. The interval K228–S258 is disordered. Over residues P236–S258 the composition is skewed to pro residues. The CBM1 domain maps to S260–L295.

Belongs to the cutinase family. In terms of processing, the 2 disulfide bonds play a critical role in holding the catalytic residues in juxta-position; reduction of the disulfide bridges results in the complete inactivation of the enzyme.

It is found in the secreted. It carries out the reaction cutin + H2O = cutin monomers.. Its function is as follows. Catalyzes the hydrolysis of complex carboxylic polyesters found in the cell wall of plants. May degrade cutin, a macromolecule that forms the structure of the plant cuticle. May also degrade suberin, a specialized macromolecule found in the cell wall of various plant tissues. Allows pathogenic fungi to penetrate through the cuticular barrier into the host plant during the initial stage of fungal infection. Involved in pathogenesis. The sequence is that of Cutinase 11 from Verticillium dahliae (Verticillium wilt).